A 259-amino-acid chain; its full sequence is Global transcriptional regulator CodY (259 aa).

The tract at residues 1–155 (MNLLAKTRKL…GATVVGMEIL (155 aa)) is GAF domain. A DNA-binding region (H-T-H motif) is located at residues 203–222 (ASKIADRVGITRSVIVNALR).

Belongs to the CodY family.

It localises to the cytoplasm. Functionally, DNA-binding global transcriptional regulator which is involved in the adaptive response to starvation and acts by directly or indirectly controlling the expression of numerous genes in response to nutrient availability. During rapid exponential growth, CodY is highly active and represses genes whose products allow adaptation to nutrient depletion. In Exiguobacterium sibiricum (strain DSM 17290 / CCUG 55495 / CIP 109462 / JCM 13490 / 255-15), this protein is Global transcriptional regulator CodY.